We begin with the raw amino-acid sequence, 371 residues long: Anhydro-N-acetylmuramic acid kinase (371 aa).

Residue 12–19 (GTSADGID) participates in ATP binding.

Belongs to the anhydro-N-acetylmuramic acid kinase family.

It carries out the reaction 1,6-anhydro-N-acetyl-beta-muramate + ATP + H2O = N-acetyl-D-muramate 6-phosphate + ADP + H(+). It participates in amino-sugar metabolism; 1,6-anhydro-N-acetylmuramate degradation. It functions in the pathway cell wall biogenesis; peptidoglycan recycling. Catalyzes the specific phosphorylation of 1,6-anhydro-N-acetylmuramic acid (anhMurNAc) with the simultaneous cleavage of the 1,6-anhydro ring, generating MurNAc-6-P. Is required for the utilization of anhMurNAc either imported from the medium or derived from its own cell wall murein, and thus plays a role in cell wall recycling. The polypeptide is Anhydro-N-acetylmuramic acid kinase (Saccharophagus degradans (strain 2-40 / ATCC 43961 / DSM 17024)).